Consider the following 104-residue polypeptide: uncharacterized protein (104 aa).

A run of 2 helical transmembrane segments spans residues 26–46 (IGTG…FTFF) and 70–90 (GLLG…IIAI).

Its subcellular location is the membrane. This is an uncharacterized protein from Acanthamoeba polyphaga mimivirus (APMV).